Consider the following 382-residue polypeptide: MKLHEYQAKEVFADAGIPTPESALATSVDEAVEVADALDYPVAVKAQVHVGGRGKAGGIKLAENTAEAREAAESILGMDLKGYTVDRVLVEEAVDFTNELYVGVTMDRSEGAPVVMVSERGGVDIESVAEEAPEDIVREHVDPSFGLQAYQARNAVYDAGIEQDVAGDVAKIVQGVYDLWADSDATEVEINPVMVTSERDVVAADAVMKLDEDALFRQPAFADMEEDAAEDDLEAKANEYGFDYVRLDGNTGIIGNGAGLVMTTLDLVDYYGGQPANFLDIGGGAKADRVANALDMVFSDENVDSVVFNIFGGITRGDEVAKGINSALEQFDEIPTPVVVRLAGTNAAEGREILNDDLVTVEETLEGAVQRAVEYADEEDIQ.

Residues 9-236 form the ATP-grasp domain; that stretch reads KEVFADAGIP…DAAEDDLEAK (228 aa). Residues Lys-45, 52–54, Glu-91, Val-94, and Glu-99 each bind ATP; that span reads GRG. Mg(2+) is bound by residues Asn-191 and Asp-205. Residues Asn-256 and 313–315 each bind substrate; that span reads GIT.

The protein belongs to the succinate/malate CoA ligase beta subunit family. In terms of assembly, heterotetramer of two alpha and two beta subunits. It depends on Mg(2+) as a cofactor.

The enzyme catalyses succinate + ATP + CoA = succinyl-CoA + ADP + phosphate. It carries out the reaction GTP + succinate + CoA = succinyl-CoA + GDP + phosphate. The protein operates within carbohydrate metabolism; tricarboxylic acid cycle; succinate from succinyl-CoA (ligase route): step 1/1. In terms of biological role, succinyl-CoA synthetase functions in the citric acid cycle (TCA), coupling the hydrolysis of succinyl-CoA to the synthesis of either ATP or GTP and thus represents the only step of substrate-level phosphorylation in the TCA. The beta subunit provides nucleotide specificity of the enzyme and binds the substrate succinate, while the binding sites for coenzyme A and phosphate are found in the alpha subunit. This is Succinate--CoA ligase [ADP-forming] subunit beta from Halobacterium salinarum (strain ATCC 29341 / DSM 671 / R1).